The chain runs to 190 residues: Cancer-related nucleoside-triphosphatase homolog (190 aa).

N-acetylalanine is present on alanine 2. ATP-binding positions include 9 to 16 and 109 to 116; these read GPPGVGKT and ICVIDEVG. Lysine 165 is modified (N6-acetyllysine).

The protein belongs to the THEP1 NTPase family. As to quaternary structure, monomer.

It carries out the reaction a ribonucleoside 5'-triphosphate + H2O = a ribonucleoside 5'-diphosphate + phosphate + H(+). It catalyses the reaction 5-methyl-UTP + H2O = 5-methyl-UDP + phosphate + H(+). The catalysed reaction is CTP + H2O = CDP + phosphate + H(+). The enzyme catalyses ATP + H2O = ADP + phosphate + H(+). It carries out the reaction GTP + H2O = GDP + phosphate + H(+). Functionally, has nucleotide phosphatase activity towards ATP, GTP, CTP, TTP and UTP. Hydrolyzes nucleoside diphosphates with lower efficiency. The chain is Cancer-related nucleoside-triphosphatase homolog (NTPCR) from Bos taurus (Bovine).